The chain runs to 2909 residues: Micronemal protein 15 (2909 aa).

Residues 1 to 29 (MVFRATREPFRLPLVAAFIALFLLKGVTC) form the signal peptide. Asparagine 512, asparagine 563, asparagine 792, asparagine 813, asparagine 986, asparagine 1007, asparagine 1057, asparagine 1142, asparagine 1319, asparagine 1395, and asparagine 1713 each carry an N-linked (GlcNAc...) asparagine glycan. Residues 1755 to 1811 (TAIVGEWGEWSACTGTCFSQWWTPKRTRTRLVLAELSHSQIPSVSETATCLDLPPCG) enclose the TSP type-1 1 domain. Positions 1937-2073 (RRKGIMSRRR…RSQARNQTPD (137 aa)) are disordered. Over residues 1967-1977 (SEQSGKASQNG) the composition is skewed to polar residues. N-linked (GlcNAc...) asparagine glycosylation is present at asparagine 1976. Residues 1978–1988 (SRRHRASRKQK) are compositionally biased toward basic residues. Polar residues predominate over residues 2004-2016 (GESTLHGTGTNAY). The span at 2049–2065 (KARRARRGAGRFRKSRS) shows a compositional bias: basic residues. A glycan (N-linked (GlcNAc...) asparagine) is linked at asparagine 2333. In terms of domain architecture, TSP type-1 2 spans 2484–2549 (TCDYTEWSEW…EKCDWMPVCP (66 aa)). 3 cysteine pairs are disulfide-bonded: cysteine 2485–cysteine 2528, cysteine 2496–cysteine 2500, and cysteine 2542–cysteine 2548. A disordered region spans residues 2552-2587 (EGEEEDDATGGVEPRGEPIVPPWSPERPTDENNQAM). N-linked (GlcNAc...) asparagine glycosylation occurs at asparagine 2706. Residues 2709–2729 (TWVICLLLGVGGGICFVLSCV) form a helical membrane-spanning segment. 3 N-linked (GlcNAc...) asparagine glycosylation sites follow: asparagine 2751, asparagine 2768, and asparagine 2793. Positions 2759–2846 (ESHKLRRQGN…IGQTSPTQQR (88 aa)) are disordered. Acidic residues predominate over residues 2801–2815 (PEEEPWQFEDRDEEP). Residues 2837–2846 (IGQTSPTQQR) show a composition bias toward polar residues.

As to quaternary structure, component of a complex, at least composed of cysteine repeat modular protein A (CRMPa), cysteine repeat modular protein B (CRMPb), micronemal protein 15 (MIC15) and thrombospondin type 1 domain-containing protein (TSP1).

It localises to the membrane. Its function is as follows. Required for rhoptry secretion. Plays a role in host cell invasion. The sequence is that of Micronemal protein 15 from Toxoplasma gondii.